Reading from the N-terminus, the 958-residue chain is Glycine dehydrogenase (decarboxylating) 2 (958 aa).

The residue at position 707 (Lys707) is an N6-(pyridoxal phosphate)lysine.

It belongs to the GcvP family. As to quaternary structure, the glycine cleavage system is composed of four proteins: P, T, L and H. Requires pyridoxal 5'-phosphate as cofactor.

The enzyme catalyses N(6)-[(R)-lipoyl]-L-lysyl-[glycine-cleavage complex H protein] + glycine + H(+) = N(6)-[(R)-S(8)-aminomethyldihydrolipoyl]-L-lysyl-[glycine-cleavage complex H protein] + CO2. The glycine cleavage system catalyzes the degradation of glycine. The P protein binds the alpha-amino group of glycine through its pyridoxal phosphate cofactor; CO(2) is released and the remaining methylamine moiety is then transferred to the lipoamide cofactor of the H protein. This is Glycine dehydrogenase (decarboxylating) 2 (gcvP2) from Pseudomonas aeruginosa (strain ATCC 15692 / DSM 22644 / CIP 104116 / JCM 14847 / LMG 12228 / 1C / PRS 101 / PAO1).